We begin with the raw amino-acid sequence, 83 residues long: Putative beta-neurotoxin RjAa12f (83 aa).

The first 18 residues, 1 to 18, serve as a signal peptide directing secretion; it reads MKILIFIIASFMLIGVEC. Residues 19-82 enclose the LCN-type CS-alpha/beta domain; that stretch reads KEGYPMGRDG…VWDSSTNKCG (64 aa). 4 disulfide bridges follow: Cys29/Cys81, Cys33/Cys55, Cys40/Cys62, and Cys44/Cys64. Residue Gly83 is a propeptide.

In terms of processing, contains 4 disulfide bonds. In terms of tissue distribution, expressed by the venom gland.

The protein localises to the secreted. Its function is as follows. Beta toxins bind voltage-independently at site-4 of sodium channels (Nav) and shift the voltage of activation toward more negative potentials thereby affecting sodium channel activation and promoting spontaneous and repetitive firing. This toxin is lethal to insects (A.domestica). It is not toxic to mice and does not affect mammal F11 sodium channels. This chain is Putative beta-neurotoxin RjAa12f, found in Rhopalurus junceus (Caribbean blue scorpion).